The sequence spans 177 residues: Parathyroid hormone-related protein (177 aa).

The first 24 residues, 1 to 24 (MLRRLVQQWGVAVFLLSYSVPSCG), serve as a signal peptide directing secretion. The propeptide occupies 25-34 (RSVEELGRRL). The tract at residues 57–68 (RFFLHHLIAEIH) is important for receptor binding. Residues 74-177 (ATSEVSPNSK…TSLELNLRRH (104 aa)) form a disordered region. Polar residues predominate over residues 76 to 90 (SEVSPNSKPAPNTKN). A Nuclear localization signal motif is present at residues 108–129 (TNKVETYKEQPLKTPGKKKKGK). Over residues 109-118 (NKVETYKEQP) the composition is skewed to basic and acidic residues. Basic residues predominate over residues 122-132 (PGKKKKGKPGK).

This sequence belongs to the parathyroid hormone family. As to quaternary structure, PTHrP interacts with PTH1R (via N-terminal extracellular domain). There are several secretory forms, including osteostatin, arising from endoproteolytic cleavage of the initial translation product. Each of these secretory forms is believed to have one or more of its own receptors that mediates the normal paracrine, autocrine and endocrine actions.

It localises to the secreted. Its subcellular location is the cytoplasm. It is found in the nucleus. In terms of biological role, neuroendocrine peptide which is a critical regulator of cellular and organ growth, development, migration, differentiation and survival and of epithelial calcium ion transport. Acts by binding to its receptor, PTH1R, activating G protein-coupled receptor signaling. Regulates endochondral bone development and epithelial-mesenchymal interactions during the formation of the mammary glands and teeth. Required for skeletal homeostasis. Promotes mammary mesenchyme differentiation and bud outgrowth by modulating mesenchymal cell responsiveness to BMPs. Up-regulates BMPR1A expression in the mammary mesenchyme and this increases the sensitivity of these cells to BMPs and allows them to respond to BMP4 in a paracrine and/or autocrine fashion. BMP4 signaling in the mesenchyme, in turn, triggers epithelial outgrowth and augments MSX2 expression, which causes the mammary mesenchyme to inhibit hair follicle formation within the nipple sheath. Potent inhibitor of osteoclastic bone resorption. This Canis lupus familiaris (Dog) protein is Parathyroid hormone-related protein (PTHLH).